The primary structure comprises 389 residues: Chalcone synthase 9 (389 aa).

C164 is a catalytic residue.

This sequence belongs to the thiolase-like superfamily. Chalcone/stilbene synthases family.

It catalyses the reaction (E)-4-coumaroyl-CoA + 3 malonyl-CoA + 3 H(+) = 2',4,4',6'-tetrahydroxychalcone + 3 CO2 + 4 CoA. The protein operates within secondary metabolite biosynthesis; flavonoid biosynthesis. Its function is as follows. The primary product of this enzyme is 4,2',4',6'-tetrahydroxychalcone (also termed naringenin-chalcone or chalcone) which can under specific conditions spontaneously isomerize into naringenin. The polypeptide is Chalcone synthase 9 (CHS9) (Medicago sativa (Alfalfa)).